The following is a 530-amino-acid chain: Glucose-6-phosphate isomerase (530 aa).

Glu356 (proton donor) is an active-site residue. Active-site residues include His387 and Lys502.

Belongs to the GPI family.

It localises to the cytoplasm. It carries out the reaction alpha-D-glucose 6-phosphate = beta-D-fructose 6-phosphate. It participates in carbohydrate biosynthesis; gluconeogenesis. The protein operates within carbohydrate degradation; glycolysis; D-glyceraldehyde 3-phosphate and glycerone phosphate from D-glucose: step 2/4. Its function is as follows. Catalyzes the reversible isomerization of glucose-6-phosphate to fructose-6-phosphate. The polypeptide is Glucose-6-phosphate isomerase (Borreliella burgdorferi (strain ATCC 35210 / DSM 4680 / CIP 102532 / B31) (Borrelia burgdorferi)).